Here is a 356-residue protein sequence, read N- to C-terminus: Protein pelota homolog (356 aa).

Belongs to the eukaryotic release factor 1 family. Pelota subfamily. Monomer. A divalent metal cation is required as a cofactor.

It localises to the cytoplasm. May function in recognizing stalled ribosomes, interact with stem-loop structures in stalled mRNA molecules, and effect endonucleolytic cleavage of the mRNA. May play a role in the release non-functional ribosomes and degradation of damaged mRNAs. Has endoribonuclease activity. The sequence is that of Protein pelota homolog from Desulfurococcus amylolyticus (strain DSM 18924 / JCM 16383 / VKM B-2413 / 1221n) (Desulfurococcus kamchatkensis).